Reading from the N-terminus, the 420-residue chain is Nucleobindin-2 (420 aa).

The N-terminal stretch at 1-24 is a signal peptide; that stretch reads MRWRTIQARYCFLLVPCVLTALEA. Residues 171 to 223 mediate DNA binding; it reads RTRHEEFKKYEMMKEHERREYLKTLSEEKRKEEEAKFAEMKRKHEDHPKVNHP. Residues 194 to 225 form a disordered region; sequence TLSEEKRKEEEAKFAEMKRKHEDHPKVNHPGS. A binds to necdin region spans residues 213-420; that stretch reads KHEDHPKVNH…AGELKFEPHT (208 aa). 2 consecutive EF-hand domains span residues 241 to 276 and 293 to 328; these read PNDFDPKTFFKLHDVNNDGFLDEQELEALFTKELDK and ERLRMREHVMNEIDNNKDRLVTLEEFLRATEKKEFL. Aspartate 254, asparagine 256, aspartate 258, glutamate 265, aspartate 306, asparagine 308, aspartate 310, and glutamate 317 together coordinate Ca(2+). A GBA motif is present at residues 304–334; that stretch reads EIDNNKDRLVTLEEFLRATEKKEFLEPDSWE. Serine 332 is modified (phosphoserine). The segment covering 366-386 has biased composition (basic and acidic residues); the sequence is DELQKQKEELQRQHDHLEAQK. The tract at residues 366-420 is disordered; it reads DELQKQKEELQRQHDHLEAQKQEYQQAVQQLEQKKFQQGIAPSGPAGELKFEPHT. Over residues 387–396 the composition is skewed to low complexity; the sequence is QEYQQAVQQL.

This sequence belongs to the nucleobindin family. As to quaternary structure, interacts (via GBA motif) with guanine nucleotide-binding protein G(i) alpha subunit GNAI3. Preferentially interacts with inactive rather than active GNAI3. Interaction with GNAI3 is inhibited when NUCB2 binds calcium, probably due to a conformational change which renders the GBA motif inaccessible. Binds to the postmitotic growth suppressor NDN; coexpression abolishes NUCB2 secretion. Interacts with MC4R.

The protein resides in the golgi apparatus. It is found in the endoplasmic reticulum. The protein localises to the nucleus envelope. Its subcellular location is the membrane. It localises to the cytoplasm. The protein resides in the secreted. Functionally, calcium-binding protein which may have a role in calcium homeostasis. Acts as a non-receptor guanine nucleotide exchange factor which binds to and activates guanine nucleotide-binding protein (G-protein) alpha subunit GNAI3. Its function is as follows. Anorexigenic peptide, seems to play an important role in hypothalamic pathways regulating food intake and energy homeostasis, acting in a leptin-independent manner. May also exert hypertensive roles and modulate blood pressure through directly acting on peripheral arterial resistance. In intestinal epithelial cells, plays a role in the inhibition of hepatic glucose production via MC4R receptor leading to increased cyclic adenosine monophosphate (cAMP) levels and glucagon-like peptide 1 (GLP-1) secretion. The protein is Nucleobindin-2 (Nucb2) of Rattus norvegicus (Rat).